The chain runs to 100 residues: MELLGEYVGQDGQRQRLRVPCEAPGNADHFQGLLSGVARMKELVAELFGSPVQGEAQDRVAAAPEEALDGDDEDDAEDENNIDNRTNSDGPTAKRPKPPS.

Met1 carries the N-acetylmethionine modification. Positions 50–100 (SPVQGEAQDRVAAAPEEALDGDDEDDAEDENNIDNRTNSDGPTAKRPKPPS) are disordered. Acidic residues predominate over residues 66 to 81 (EALDGDDEDDAEDENN).

As to quaternary structure, component of the EKC/KEOPS complex composed of at least GON7, TP53RK, TPRKB, OSGEP and LAGE3; the whole complex dimerizes.

It is found in the nucleus. Component of the EKC/KEOPS complex that is required for the formation of a threonylcarbamoyl group on adenosine at position 37 (t(6)A37) in tRNAs that read codons beginning with adenine. The complex is probably involved in the transfer of the threonylcarbamoyl moiety of threonylcarbamoyl-AMP (TC-AMP) to the N6 group of A37. GON7 plays a supporting role to the catalytic subunit OSGEP in the complex. The chain is EKC/KEOPS complex subunit GON7 from Sus scrofa (Pig).